We begin with the raw amino-acid sequence, 1282 residues long: Clustered mitochondria protein homolog (1282 aa).

The interval 1–50 is disordered; sequence MADASQATTPAAEGNPVPEVPETQTPPADVNGTTEQEQTEEGAEQALEDQ. Low complexity predominate over residues 16-36; the sequence is PVPEVPETQTPPADVNGTTEQ. Residues 37 to 47 are compositionally biased toward acidic residues; sequence EQTEEGAEQAL. The 245-residue stretch at 331-575 folds into the Clu domain; that stretch reads DNTRSQETYL…RITPLDIAWM (245 aa). Positions 623–650 form a coiled coil; that stretch reads EEKKEGEEATEEAKTEEIKTEEAEKSEE. Composition is skewed to basic and acidic residues over residues 624-661 and 668-680; these read EKKE…KTEE and VAEK…AKED. Disordered stretches follow at residues 624–680 and 913–945; these read EKKE…AKED and PVAE…TSPV. 3 TPR repeats span residues 1021 to 1054, 1063 to 1096, and 1105 to 1138; these read AQMY…AERT, VLNY…WKVI, and ITTM…CNKV. The tract at residues 1257–1282 is disordered; the sequence is VENSEKKKGGKKSKGPSNPKKRGGKA. Basic residues predominate over residues 1264–1282; that stretch reads KGGKKSKGPSNPKKRGGKA.

It belongs to the CLU family. In terms of assembly, may associate with the eukaryotic translation initiation factor 3 (eIF-3) complex.

It localises to the cytoplasm. MRNA-binding protein involved in proper cytoplasmic distribution of mitochondria. The sequence is that of Clustered mitochondria protein homolog from Neurospora crassa (strain ATCC 24698 / 74-OR23-1A / CBS 708.71 / DSM 1257 / FGSC 987).